A 634-amino-acid chain; its full sequence is Probable potassium transport system protein Kup (634 aa).

Helical transmembrane passes span 21–41, 58–78, 110–130, 152–172, 179–199, 223–243, 258–278, 296–316, 348–368, 377–397, 403–423, and 427–447; these read LVIG…LYTL, VLGI…LKYV, MYVV…DGVI, PFVV…QRFG, AFGP…VYNM, WHAV…EALY, WQFV…ALML, ALYP…QALI, IYVP…VIGF, AYGV…IIYA, VPAP…CAFF, and IIKF…LFTL.

This sequence belongs to the HAK/KUP transporter (TC 2.A.72) family.

Its subcellular location is the cell inner membrane. It catalyses the reaction K(+)(in) + H(+)(in) = K(+)(out) + H(+)(out). Functionally, transport of potassium into the cell. Likely operates as a K(+):H(+) symporter. The sequence is that of Probable potassium transport system protein Kup from Xanthomonas euvesicatoria pv. vesicatoria (strain 85-10) (Xanthomonas campestris pv. vesicatoria).